The sequence spans 977 residues: Leucine--tRNA ligase (977 aa).

The 'HIGH' region motif lies at proline 11 to histidine 21. The insert stretch occupies residues valine 220–glutamine 318. The short motif at lysine 699–serine 703 is the 'KMSKS' region element. Lysine 702 is an ATP binding site.

The protein belongs to the class-I aminoacyl-tRNA synthetase family.

Its subcellular location is the cytoplasm. The catalysed reaction is tRNA(Leu) + L-leucine + ATP = L-leucyl-tRNA(Leu) + AMP + diphosphate. In Nanoarchaeum equitans (strain Kin4-M), this protein is Leucine--tRNA ligase (leuS).